We begin with the raw amino-acid sequence, 536 residues long: SNW domain-containing protein 1 (536 aa).

Residues 1 to 46 are disordered; sequence MALTSFLPAPTQLSQDQLEAEEKARSQRSRQTSLVSSRREPPPYGY. N-acetylalanine is present on Ala-2. Ser-14 is subject to Phosphoserine. A Glycyl lysine isopeptide (Lys-Gly) (interchain with G-Cter in SUMO2) cross-link involves residue Lys-23. An interaction with PPIL1 region spans residues 59 to 79; sequence GDGGAFPEIHVAQYPLDMGRK. Residues Lys-81, Lys-97, Lys-115, Lys-122, Lys-141, Lys-158, and Lys-170 each participate in a glycyl lysine isopeptide (Lys-Gly) (interchain with G-Cter in SUMO2) cross-link. The SNW stretch occupies residues 174–339; that stretch reads AQYIRYTPSQ…KARERRAGIK (166 aa). Phosphoserine is present on residues Ser-182 and Ser-190. Lys-193 participates in a covalent cross-link: Glycyl lysine isopeptide (Lys-Gly) (interchain with G-Cter in SUMO2). The disordered stretch occupies residues 209-233; the sequence is PPRFKINKKIPRGPPSPPAPVMHSP. Phosphoserine occurs at positions 224, 232, and 234. Glycyl lysine isopeptide (Lys-Gly) (interchain with G-Cter in SUMO2) cross-links involve residues Lys-240, Lys-258, Lys-286, Lys-339, Lys-344, Lys-416, and Lys-441. Residues 311–386 are disordered; the sequence is KMAQKEKEKH…RSKLQRNENR (76 aa). Ser-446 carries the phosphoserine modification. A Glycyl lysine isopeptide (Lys-Gly) (interchain with G-Cter in SUMO2) cross-link involves residue Lys-452. 2 stretches are compositionally biased toward basic and acidic residues: residues 470-489 and 503-530; these read NRFV…RGRE and KFLE…EHEG. The segment at 470 to 536 is disordered; it reads NRFVPDKEFS…EHEGKKRRKE (67 aa). Ser-479 and Ser-481 each carry phosphoserine. A Glycyl lysine isopeptide (Lys-Gly) (interchain with G-Cter in SUMO2) cross-link involves residue Lys-509.

Belongs to the SNW family. In terms of assembly, identified in the spliceosome C complex. Associates with U4/U6-U5 tri-small nuclear ribonucleoproteins (U4/U6-U5 tri-snRNPs). Component of the minor spliceosome, which splices U12-type introns. Interacts with SKI, SMAD2,SMAD3, RBPJ, RB1, PABPN1, MAGEA1, SIRT1, FOXN3, U2AF2, DAXX and ATP1B4. Interacts with PPIL1. Interacts with VDR and RXRA; preferentially associates with VDR:RXRA heterodimers. Interacts with NCOR2. Interacts with MAML1. Interacts with NOTCH1 NICD; the interaction involves multimerized NOTCH1 NICD. Forms a complex with NOTCH1 NICD and MAML1; the association is dissociated by RBPJ. Associates with positive transcription elongation factor b (P-TEFb). Component of the SNARP complex which consists at least of SNIP1, SNW1, THRAP3, BCLAF1 and PNN. As to quaternary structure, (Microbial infection) Interacts with human papillomavirus type-16 (HPV16) E7 protein. (Microbial infection) Interacts with EBV EBNA2; EBNA2 competes with NCOR2 for interaction with SNW1.

It localises to the nucleus. In terms of biological role, involved in pre-mRNA splicing as component of the spliceosome. As a component of the minor spliceosome, involved in the splicing of U12-type introns in pre-mRNAs. Required for the specific splicing of CDKN1A pre-mRNA; the function probably involves the recruitment of U2AF2 to the mRNA. May recruit PPIL1 to the spliceosome. May be involved in cyclin-D1/CCND1 mRNA stability through the SNARP complex which associates with both the 3'end of the CCND1 gene and its mRNA. Involved in transcriptional regulation. Modulates TGF-beta-mediated transcription via association with SMAD proteins, MYOD1-mediated transcription via association with PABPN1, RB1-mediated transcriptional repression, and retinoid-X receptor (RXR)- and vitamin D receptor (VDR)-dependent gene transcription in a cell line-specific manner probably involving coactivators NCOA1 and GRIP1. Is involved in NOTCH1-mediated transcriptional activation. Binds to multimerized forms of Notch intracellular domain (NICD) and is proposed to recruit transcriptional coactivators such as MAML1 to form an intermediate preactivation complex which associates with DNA-bound CBF-1/RBPJ to form a transcriptional activation complex by releasing SNW1 and redundant NOTCH1 NICD. Functionally, (Microbial infection) Is recruited by HIV-1 Tat to Tat:P-TEFb:TAR RNA complexes and is involved in Tat transcription by recruitment of MYC, MEN1 and TRRAP to the HIV promoter. (Microbial infection) Proposed to be involved in transcriptional activation by EBV EBNA2 of CBF-1/RBPJ-repressed promoters. The sequence is that of SNW domain-containing protein 1 (SNW1) from Homo sapiens (Human).